A 1259-amino-acid polypeptide reads, in one-letter code: Receptor tyrosine-protein kinase erbB-2 (1259 aa).

The first 22 residues, 1-22, serve as a signal peptide directing secretion; sequence MELAAWCRWGLLLALLPSGAAG. Topologically, residues 23–653 are extracellular; it reads TQVCTGTDMK…EQRASPVTSI (631 aa). Cysteines 26 and 53 form a disulfide. An N-linked (GlcNAc...) asparagine glycan is attached at Asn-68. Cystine bridges form between Cys-162–Cys-192, Cys-195–Cys-204, Cys-199–Cys-212, Cys-220–Cys-227, Cys-224–Cys-235, Cys-236–Cys-244, Cys-240–Cys-252, Cys-255–Cys-264, Cys-268–Cys-295, Cys-299–Cys-311, Cys-315–Cys-331, Cys-334–Cys-338, and Cys-342–Cys-367. Thr-182 carries the post-translational modification Phosphothreonine. Asn-259 carries N-linked (GlcNAc...) asparagine glycosylation. The N-linked (GlcNAc...) asparagine glycan is linked to Asn-421. 3 disulfides stabilise this stretch: Cys-475/Cys-504, Cys-511/Cys-519, and Cys-514/Cys-527. Asn-529 carries an N-linked (GlcNAc...) asparagine glycan. Cystine bridges form between Cys-530-Cys-539, Cys-543-Cys-559, Cys-562-Cys-575, Cys-566-Cys-583, Cys-586-Cys-595, Cys-599-Cys-622, Cys-625-Cys-633, and Cys-629-Cys-641. The N-linked (GlcNAc...) asparagine glycan is linked to Asn-570. Asn-628 carries an N-linked (GlcNAc...) asparagine glycan. The helical transmembrane segment at 654 to 674 threads the bilayer; that stretch reads IAAVVGILLAVVVGLVLGILI. The required for interaction with KPNB1 and EEA1 stretch occupies residues 675–688; that stretch reads KRRRQKIRKYTMRR. The short motif at 675-688 is the Nuclear localization signal element; sequence KRRRQKIRKYTMRR. Topologically, residues 675–1259 are cytoplasmic; the sequence is KRRRQKIRKY…PEYLGLDVPV (585 aa). Residues 719–986 form the Protein kinase domain; the sequence is LRKVKVLGSG…RMARDPQRFV (268 aa). Residues 725–733 and Lys-752 contribute to the ATP site; that span reads LGSGAFGTV. Asp-844 (proton acceptor) is an active-site residue. At Tyr-876 the chain carries Phosphotyrosine. Positions 1027 to 1183 are disordered; that stretch reads QGFFCPEPTP…PKTLSPGKNG (157 aa). Phosphoserine is present on residues Ser-1077, Ser-1082, and Ser-1106. Tyr-1111 is subject to Phosphotyrosine. Tyr-1138 bears the Phosphotyrosine; by autocatalysis mark. Pro residues predominate over residues 1145–1160; that stretch reads WPQPPLALEGPLPPSR. Thr-1165 bears the Phosphothreonine mark. The interaction with PIK3C2B stretch occupies residues 1199 to 1201; sequence EYL. Position 1200 is a phosphotyrosine (Tyr-1200). Residues 1203–1259 are disordered; that stretch reads PRGRAAPQPHPPPAFSPAFDNLYYWDQDPSERGSPPSTFEGTPTAENPEYLGLDVPV. Over residues 1237-1247 the composition is skewed to polar residues; sequence PPSTFEGTPTA. Position 1252 is a phosphotyrosine; by autocatalysis (Tyr-1252).

This sequence belongs to the protein kinase superfamily. Tyr protein kinase family. EGF receptor subfamily. Homodimer. Heterodimer with EGFR, ERBB3 and ERBB4. Part of a complex with EGFR and either PIK3C2A or PIK3C2B. May interact with PIK3C2B when phosphorylated on Tyr-1200. Interacts with PRKCABP and PLXNB1. Interacts (when phosphorylated on Tyr-1252) with MEMO1. Interacts with MUC1. Interacts (when phosphorylated on Tyr-1138) with GRB7 (via SH2 domain). Interacts (when phosphorylated on Tyr-1252) with ERBIN. Interacts with SRC, KPNB1, PTK6, RANBP2, EEA1, CRM1, CLTC, RPA194, MYOC and ACTB. Interacts (preferentially with the tyrosine phosphorylated form) with CPNE3; this interaction occurs at the cell membrane and is increased in a growth factor heregulin-dependent manner. Interacts with HSP90AA1 and HSP90AB1 in an ATP-dependent manner; the interaction suppresses ERBB2 kinase activity. Interacts with SORL1; this interaction regulates ERBB2 subcellular distribution by promoting its recycling after internalization from endosomes back to the plasma membrane, hence stimulates ERBB2-mediated signaling. Interacts with SH3BGRL. Interacts with ROR1. Post-translationally, autophosphorylated. Autophosphorylation occurs in trans, i.e. one subunit of the dimeric receptor phosphorylates tyrosine residues on the other subunit. Ligand-binding increases phosphorylation on tyrosine residues. Signaling via SEMA4C promotes phosphorylation at Tyr-1252. Dephosphorylated by PTPN12.

It is found in the cell membrane. It localises to the cell projection. The protein localises to the ruffle membrane. The protein resides in the early endosome. Its subcellular location is the cytoplasm. It is found in the perinuclear region. It localises to the nucleus. The catalysed reaction is L-tyrosyl-[protein] + ATP = O-phospho-L-tyrosyl-[protein] + ADP + H(+). Its function is as follows. Protein tyrosine kinase that is part of several cell surface receptor complexes, but that apparently needs a coreceptor for ligand binding. Essential component of a neuregulin-receptor complex, although neuregulins do not interact with it alone. GP30 is a potential ligand for this receptor. Regulates outgrowth and stabilization of peripheral microtubules (MTs). Upon ERBB2 activation, the MEMO1-RHOA-DIAPH1 signaling pathway elicits the phosphorylation and thus the inhibition of GSK3B at cell membrane. This prevents the phosphorylation of APC and CLASP2, allowing its association with the cell membrane. In turn, membrane-bound APC allows the localization of MACF1 to the cell membrane, which is required for microtubule capture and stabilization. In terms of biological role, in the nucleus is involved in transcriptional regulation. Associates with the 5'-TCAAATTC-3' sequence in the PTGS2/COX-2 promoter and activates its transcription. Implicated in transcriptional activation of CDKN1A; the function involves STAT3 and SRC. Involved in the transcription of rRNA genes by RNA Pol I and enhances protein synthesis and cell growth. This Canis lupus familiaris (Dog) protein is Receptor tyrosine-protein kinase erbB-2 (ERBB2).